A 331-amino-acid chain; its full sequence is DSC E3 ubiquitin ligase complex subunit D (331 aa).

A glycan (N-linked (GlcNAc...) asparagine) is linked at Asn26. 3 helical membrane-spanning segments follow: residues 63-83, 107-127, and 159-179; these read ILIYCELSALYYMDCSVILFA, PFIGAIFVSNIFCMIFHNFFT, and LFLLDFLVLILDLVMLGLIVE. Over residues 197-214 the composition is skewed to basic and acidic residues; sequence VQDHDSEERGVHRTRPES. Residues 197 to 225 form a disordered region; the sequence is VQDHDSEERGVHRTRPESRSSVVGAELDE.

Component of the DSC E3 ubiquitin ligase complex composed of dscA, dscB, dscC and dscD.

The protein resides in the endoplasmic reticulum membrane. The protein operates within protein modification; protein ubiquitination. Functionally, component of the DSC E3 ubiquitin ligase complex which is required for the srbA transcriptional activator proteolytic cleavage to release the soluble transcription factor from the membrane in low oxygen or sterol conditions. Required for growth during hypoxia and triazole drug susceptibility, as well as for virulence in a murine model of invasive pulmonary aspergillosis (IPA). This Aspergillus fumigatus (strain CBS 144.89 / FGSC A1163 / CEA10) (Neosartorya fumigata) protein is DSC E3 ubiquitin ligase complex subunit D.